The primary structure comprises 434 residues: MASYVIEGGNSLKGEILVQGAKNEALQIISATLLTDQEVVVRNIPDILDVNNLIDLLRNMGVKVKRPTRDTCVFQADNVNLDYIKSEQFLEKSRALRGSVLLVGPLISRFGYAIFPKPGGDKIGRRRLDTHLVGIQALGATCDYHSDMQAYELTASRLSGTYMLLDEASVTGTANILMAAVLADGITTIYNAACEPYLQQLCKMLLSMGAHIEGVGSNLLRIEGVQSLHGCEHKMLPDMIEVGSFIGMAAMTASELLIKDVSVPDLGIIPASFRRLGIAVEQQGDDLFIPKQEHYEIETFMDGSIMTIADAPWPGLTPDLLSVFLVVATQAKGSVLIHQKMFESRLFFVDKLIDMGAQIILCDPHRATIIGLDKRVPLRAATMVSPDIRAGIALLIAAMSAEGTSIIHNVEQIDRGYQSIDTRLNAIGARISRL.

22 to 23 (KN) provides a ligand contact to phosphoenolpyruvate. Residue Arg-97 coordinates UDP-N-acetyl-alpha-D-glucosamine. Asp-121 acts as the Proton donor in catalysis. UDP-N-acetyl-alpha-D-glucosamine-binding residues include Asp-319 and Met-341.

It belongs to the EPSP synthase family. MurA subfamily.

Its subcellular location is the cytoplasm. The catalysed reaction is phosphoenolpyruvate + UDP-N-acetyl-alpha-D-glucosamine = UDP-N-acetyl-3-O-(1-carboxyvinyl)-alpha-D-glucosamine + phosphate. Its pathway is cell wall biogenesis; peptidoglycan biosynthesis. Its function is as follows. Cell wall formation. Adds enolpyruvyl to UDP-N-acetylglucosamine. The sequence is that of UDP-N-acetylglucosamine 1-carboxyvinyltransferase from Porphyromonas gingivalis (strain ATCC BAA-308 / W83).